We begin with the raw amino-acid sequence, 1728 residues long: U3 small nucleolar RNA-associated protein 10 (1728 aa).

HEAT repeat units follow at residues 540–578 (DKDF…LVKE), 881–926 (PANH…MMPA), 986–1024 (FMGS…AYEH), 1191–1229 (LLSI…SEST), 1235–1274 (REAL…KYGK), 1622–1662 (ADAT…GQAA), and 1683–1721 (LQAL…KLGE).

The protein belongs to the HEATR1/UTP10 family. In terms of assembly, component of the ribosomal small subunit (SSU) processome.

The protein resides in the nucleus. Its subcellular location is the nucleolus. Functionally, involved in nucleolar processing of pre-18S ribosomal RNA. Involved in ribosome biosynthesis. In Chaetomium globosum (strain ATCC 6205 / CBS 148.51 / DSM 1962 / NBRC 6347 / NRRL 1970) (Soil fungus), this protein is U3 small nucleolar RNA-associated protein 10.